Reading from the N-terminus, the 222-residue chain is Ras-related protein Rab11D (222 aa).

Position 22 to 29 (22 to 29) interacts with GTP; that stretch reads GDSAVGKS. Positions 44 to 52 match the Effector region motif; sequence SKATIGVEF. GTP is bound by residues 70 to 74 and 128 to 131; these read DTAGQ and NKTD. Residues Cys-219 and Cys-220 are each lipidated (S-geranylgeranyl cysteine).

It belongs to the small GTPase superfamily. Rab family.

Its subcellular location is the cell membrane. The protein is Ras-related protein Rab11D (RAB11D) of Nicotiana tabacum (Common tobacco).